We begin with the raw amino-acid sequence, 466 residues long: Methylenetetrahydrofolate--tRNA-(uracil-5-)-methyltransferase TrmFO (466 aa).

14–19 (GGGLAG) is an FAD binding site.

This sequence belongs to the MnmG family. TrmFO subfamily. FAD is required as a cofactor.

The protein localises to the cytoplasm. The enzyme catalyses uridine(54) in tRNA + (6R)-5,10-methylene-5,6,7,8-tetrahydrofolate + NADH + H(+) = 5-methyluridine(54) in tRNA + (6S)-5,6,7,8-tetrahydrofolate + NAD(+). It carries out the reaction uridine(54) in tRNA + (6R)-5,10-methylene-5,6,7,8-tetrahydrofolate + NADPH + H(+) = 5-methyluridine(54) in tRNA + (6S)-5,6,7,8-tetrahydrofolate + NADP(+). Functionally, catalyzes the folate-dependent formation of 5-methyl-uridine at position 54 (M-5-U54) in all tRNAs. This chain is Methylenetetrahydrofolate--tRNA-(uracil-5-)-methyltransferase TrmFO, found in Brucella canis (strain ATCC 23365 / NCTC 10854 / RM-666).